Consider the following 385-residue polypeptide: Ethanolamine kinase 2 (385 aa).

Belongs to the choline/ethanolamine kinase family. In terms of tissue distribution, expressed in testis and liver. Low expression in ovary and kidney.

It catalyses the reaction ethanolamine + ATP = phosphoethanolamine + ADP + H(+). It participates in phospholipid metabolism; phosphatidylethanolamine biosynthesis; phosphatidylethanolamine from ethanolamine: step 1/3. Functionally, highly specific for ethanolamine phosphorylation. Does not have choline kinase activity. This is Ethanolamine kinase 2 (Etnk2) from Mus musculus (Mouse).